The following is a 481-amino-acid chain: Inosine-5'-monophosphate dehydrogenase (481 aa).

2 CBS domains span residues 92 to 148 (VIND…SKKV) and 152 to 209 (MTKM…PEAN). NAD(+)-binding positions include D244 and 293-295 (GIG). Residues G295 and G297 each coordinate K(+). S298 lines the IMP pocket. Position 300 (C300) interacts with K(+). C300 functions as the Thioimidate intermediate in the catalytic mechanism. Residues 333–335 (DGG), 356–357 (GS), and 380–384 (YRGMG) contribute to the IMP site. Residue R396 is the Proton acceptor of the active site. IMP is bound at residue E410. K(+) is bound by residues E464, S465, and H466.

It belongs to the IMPDH/GMPR family. Homotetramer. It depends on K(+) as a cofactor.

The catalysed reaction is IMP + NAD(+) + H2O = XMP + NADH + H(+). It participates in purine metabolism; XMP biosynthesis via de novo pathway; XMP from IMP: step 1/1. Mycophenolic acid (MPA) is a non-competitive inhibitor that prevents formation of the closed enzyme conformation by binding to the same site as the amobile flap. In contrast, mizoribine monophosphate (MZP) is a competitive inhibitor that induces the closed conformation. MPA is a potent inhibitor of mammalian IMPDHs but a poor inhibitor of the bacterial enzymes. MZP is a more potent inhibitor of bacterial IMPDH. In terms of biological role, catalyzes the conversion of inosine 5'-phosphate (IMP) to xanthosine 5'-phosphate (XMP), the first committed and rate-limiting step in the de novo synthesis of guanine nucleotides, and therefore plays an important role in the regulation of cell growth. This is Inosine-5'-monophosphate dehydrogenase from Helicobacter pylori (strain ATCC 700392 / 26695) (Campylobacter pylori).